The chain runs to 151 residues: Endoribonuclease YbeY (151 aa).

Zn(2+) contacts are provided by His-108, His-112, and Asp-118.

It belongs to the endoribonuclease YbeY family. Zn(2+) is required as a cofactor.

It localises to the cytoplasm. Single strand-specific metallo-endoribonuclease involved in late-stage 70S ribosome quality control and in maturation of the 3' terminus of the 16S rRNA. This Porphyromonas gingivalis (strain ATCC 33277 / DSM 20709 / CIP 103683 / JCM 12257 / NCTC 11834 / 2561) protein is Endoribonuclease YbeY.